The sequence spans 437 residues: Protein translocase subunit SecY (437 aa).

The next 10 membrane-spanning stretches (helical) occupy residues 23-43 (IVFLIVAIIVFRIGSFIPIPG), 77-97 (IFALGIMPYISASIIIQLLTL), 125-145 (LILALVQSIGIAMTLPNIAGI), 154-174 (FYFYLIAIISLVTSTMFLMWL), 183-203 (IGNGISIIIFIGIIAGLPSAI), 217-237 (ILLFLFILLLIFSVIFLVVFM), 271-291 (MAGVIPAIFASSIVLFPATII), 315-335 (YLILYISAIVFFCFFYTGLVF), 367-387 (IMLRLTLVGSLYITFICLIPE), and 395-415 (VPFYFGGTSLLIVVVVIIDFI).

This sequence belongs to the SecY/SEC61-alpha family. In terms of assembly, component of the Sec protein translocase complex. Heterotrimer consisting of SecY, SecE and SecG subunits. The heterotrimers can form oligomers, although 1 heterotrimer is thought to be able to translocate proteins. Interacts with the ribosome. Interacts with SecDF, and other proteins may be involved. Interacts with SecA.

It localises to the cell membrane. The central subunit of the protein translocation channel SecYEG. Consists of two halves formed by TMs 1-5 and 6-10. These two domains form a lateral gate at the front which open onto the bilayer between TMs 2 and 7, and are clamped together by SecE at the back. The channel is closed by both a pore ring composed of hydrophobic SecY resides and a short helix (helix 2A) on the extracellular side of the membrane which forms a plug. The plug probably moves laterally to allow the channel to open. The ring and the pore may move independently. The sequence is that of Protein translocase subunit SecY from Buchnera aphidicola subsp. Acyrthosiphon pisum (strain APS) (Acyrthosiphon pisum symbiotic bacterium).